Consider the following 283-residue polypeptide: Protoheme IX farnesyltransferase (283 aa).

A run of 9 helical transmembrane segments spans residues 6–26, 35–55, 85–105, 106–126, 131–151, 160–180, 207–227, 230–250, and 262–282; these read LLLT…AGFL, FGLF…GCVF, AIVF…FYTN, LLTL…YSIW, VYGT…GYCA, AFIL…SIAI, ILLY…FHFT, LYLI…LRGL, and MFRF…FDLV.

The protein belongs to the UbiA prenyltransferase family. Protoheme IX farnesyltransferase subfamily.

The protein resides in the cell inner membrane. It catalyses the reaction heme b + (2E,6E)-farnesyl diphosphate + H2O = Fe(II)-heme o + diphosphate. Its pathway is porphyrin-containing compound metabolism; heme O biosynthesis; heme O from protoheme: step 1/1. Its function is as follows. Converts heme B (protoheme IX) to heme O by substitution of the vinyl group on carbon 2 of heme B porphyrin ring with a hydroxyethyl farnesyl side group. This chain is Protoheme IX farnesyltransferase, found in Protochlamydia amoebophila (strain UWE25).